Here is a 485-residue protein sequence, read N- to C-terminus: WD repeat-containing protein 13 (485 aa).

N-acetylmethionine is present on M1. 3 positions are modified to phosphoserine: S70, S74, and S79. Residue R114 is modified to Asymmetric dimethylarginine; alternate. Residue R114 is modified to Omega-N-methylarginine; alternate. WD repeat units follow at residues 162–202 (GMYH…LCQL), 208–246 (TVLRVLRGHTRGVSDFAWSLSNDILVSTSLDATMRIWAS), 250–290 (RCIR…VMNI), 295–335 (KVKG…LFDM), 341–389 (TKAK…VVDN), 394–438 (QLKR…FFDV), and 444–482 (AAVNKLQGHSAPVLDVSFNCDESLLASSDASGMVIVWRR).

Widely expressed.

Its subcellular location is the nucleus. The chain is WD repeat-containing protein 13 (WDR13) from Homo sapiens (Human).